The following is a 426-amino-acid chain: Citrate transporter (426 aa).

Transmembrane regions (helical) follow at residues 1–21 (MLAI…MSNR), 22–42 (LSAL…SGFG), 59–79 (TGIM…SGLF), 86–106 (ILSF…VLTM), 137–157 (LVLA…PWGG), 176–196 (PLIP…YILG), 232–252 (LLTV…PVLF), 278–298 (AGNA…TGIL), 318–338 (AMGP…TFFM), 343–363 (FYFG…IDAA), 377–397 (LLSP…VSFG), and 406–426 (WAVG…IISF).

This sequence belongs to the CitM (TC 2.A.11) transporter family.

Its subcellular location is the cell membrane. In terms of biological role, transports the free citrate anion. Probably cotransports citrate and at least three or four protons. The citrate uptake is inhibited by the presence of magnesium ions. The chain is Citrate transporter (citN) from Bacillus subtilis (strain 168).